Reading from the N-terminus, the 595-residue chain is Elongation factor 4 (595 aa).

The region spanning 2 to 184 is the tr-type G domain; it reads KNIRNFSIIA…QIVERIPTPK (183 aa). GTP-binding positions include 14–19 and 131–134; these read DHGKST and NKID.

It belongs to the TRAFAC class translation factor GTPase superfamily. Classic translation factor GTPase family. LepA subfamily.

It localises to the cell inner membrane. It catalyses the reaction GTP + H2O = GDP + phosphate + H(+). Functionally, required for accurate and efficient protein synthesis under certain stress conditions. May act as a fidelity factor of the translation reaction, by catalyzing a one-codon backward translocation of tRNAs on improperly translocated ribosomes. Back-translocation proceeds from a post-translocation (POST) complex to a pre-translocation (PRE) complex, thus giving elongation factor G a second chance to translocate the tRNAs correctly. Binds to ribosomes in a GTP-dependent manner. In Vesicomyosocius okutanii subsp. Calyptogena okutanii (strain HA), this protein is Elongation factor 4.